The primary structure comprises 563 residues: DNA polymerase III subunit tau (563 aa).

45 to 52 serves as a coordination point for ATP; it reads GPRGTGKT. Residues C64, C73, C76, and C79 each coordinate Zn(2+).

This sequence belongs to the DnaX/STICHEL family. In terms of assembly, component of the DNA clamp loading complex consisting of tau(3):delta(1):delta'(1). The DNA polymerase III holoenzyme complex contains at least 10 different subunits organized into 3 functionally essential subassemblies: the Pol III core, the beta sliding clamp processivity factor and the clamp-loading complex. The Pol III core (subunits alpha, epsilon and theta) contains the polymerase and the 3'-5' exonuclease proofreading activities. The polymerase is tethered to the template via the dimeric beta sliding clamp processivity factor. The DNA clamp-loading complex assembles the beta sliding clamp onto the primed template and plays a central role in the organization and communication at the replication fork. Forms a complex with replicative DNA helicase DnaB (shown with G.stearothermophilus DnaB) tau(3):DnaB(6); a single ATP hydrolysis even is sufficient for complex formation. Colocalizes with DNA helicases PriA, RecQ and RecS.

The protein localises to the cytoplasm. The protein resides in the nucleoid. It catalyses the reaction DNA(n) + a 2'-deoxyribonucleoside 5'-triphosphate = DNA(n+1) + diphosphate. Functionally, part of the beta sliding clamp loading complex, which hydrolyzes ATP to load the beta clamp onto primed DNA to form the DNA replication pre-initiation complex. DNA polymerase III is a complex, multichain enzyme responsible for most of the replicative DNA synthesis in bacteria. This chain is DNA polymerase III subunit tau, found in Bacillus subtilis (strain 168).